The primary structure comprises 406 residues: chitinase-like effector (406 aa).

An N-terminal signal peptide occupies residues 1 to 23 (MLTLLPSLILLLSTLSLSTPANA). The region spanning 26 to 405 (AIAKAYYPGW…DAVRHGAGFK (380 aa)) is the GH18 domain. The chitin site is built by Tyr138 and Trp384.

Belongs to the glycosyl hydrolase 18 family.

It is found in the secreted. Catalytically impaired chitinase that binds efficiently to chitin, but not to chitosan, xylan, or cellulose. Despite the lack of chitinolytic activity, retains substrate binding specificity and acts as an effector to prevent chitin-triggered immunity by sequestering immunogenic chitin fragments. The sequence is that of chitinase-like effector (Chi) from Moniliophthora roreri (Frosty pod rot fungus).